A 177-amino-acid chain; its full sequence is Large ribosomal subunit protein uL6 (177 aa).

Belongs to the universal ribosomal protein uL6 family. As to quaternary structure, part of the 50S ribosomal subunit.

In terms of biological role, this protein binds to the 23S rRNA, and is important in its secondary structure. It is located near the subunit interface in the base of the L7/L12 stalk, and near the tRNA binding site of the peptidyltransferase center. The sequence is that of Large ribosomal subunit protein uL6 from Halorhodospira halophila (strain DSM 244 / SL1) (Ectothiorhodospira halophila (strain DSM 244 / SL1)).